The chain runs to 427 residues: Transcobalamin-2 (427 aa).

An N-terminal signal peptide occupies residues 1–18; that stretch reads MRHLGALLFLLGVLGALA. 3 disulfides stabilise this stretch: cysteine 21/cysteine 267, cysteine 116/cysteine 309, and cysteine 165/cysteine 205. Residues glutamine 104, 152-156, histidine 190, 190-194, asparagine 242, serine 245, glutamine 291, and 395-397 contribute to the cob(II)alamin site; these read TSYYQ, HHSVD, and WQL.

It belongs to the eukaryotic cobalamin transport proteins family. In terms of assembly, interacts with CD320 (via LDL-receptor class A domains).

The protein localises to the secreted. Primary vitamin B12-binding and transport protein. Delivers cobalamin to cells. In Pongo abelii (Sumatran orangutan), this protein is Transcobalamin-2 (TCN2).